Reading from the N-terminus, the 330-residue chain is Mitochondrial glycine transporter (330 aa).

Solcar repeat units follow at residues 11–94, 122–206, and 234–318; these read SSSY…LRQN, LSNL…LKKR, and TSAS…LIRR. 6 helical membrane-spanning segments follow: residues 17–42, 69–95, 128–153, 181–204, 238–264, and 293–311; these read FTAG…TRLQ, GTVP…RQNV, LTTG…VRYE, GFGA…EQLK, INFG…KTRI, and GLGL…AWTI.

This sequence belongs to the mitochondrial carrier (TC 2.A.29) family. SLC25A38 subfamily.

The protein localises to the mitochondrion inner membrane. The catalysed reaction is glycine(in) = glycine(out). In terms of biological role, mitochondrial glycine transporter that imports glycine into the mitochondrial matrix. Plays an important role in providing glycine for the first enzymatic step in heme biosynthesis, the condensation of glycine with succinyl-CoA to produce 5-aminolevulinate (ALA) in the mitochondrial matrix. In Sclerotinia sclerotiorum (strain ATCC 18683 / 1980 / Ss-1) (White mold), this protein is Mitochondrial glycine transporter.